The chain runs to 809 residues: Protein TOC75, chloroplastic (809 aa).

Polar residues predominate over residues 1–17 (MRTSVIPNRLTPTLTTH). Residues 1 to 35 (MRTSVIPNRLTPTLTTHPSRRRNDHITTRTSSLKC) constitute a chloroplast transit peptide. Residues 1–44 (MRTSVIPNRLTPTLTTHPSRRRNDHITTRTSSLKCHLSPSSGDN) form a disordered region. The transit peptide at 36–131 (HLSPSSGDNN…RILSPARAIA (96 aa)) directs the protein to the chloroplast; outer membrane. At 132-143 (DEPKSEDWDSHE) the chain is on the chloroplast intermembrane side. A beta stranded transmembrane segment spans residues 144–152 (LPADITVLL). Residues 153-160 (GRLSGFKK) lie on the Cytoplasmic side of the membrane. The beta stranded transmembrane segment at 161 to 169 (YKISDILFF) threads the bilayer. At 170 to 225 (DRNKKSKVETQDSFLDMVSLKPGGVYTKAQLQKELESLATCGMFEKVDMEGKTNAD) the chain is on the chloroplast intermembrane side. A beta stranded membrane pass occupies residues 226-234 (GSLGLTISF). The Cytoplasmic segment spans residues 235–247 (AESMWERADRFRC). The chain crosses the membrane as a beta stranded span at residues 248 to 254 (INVGLMG). Over 255-357 (QSKPVEMDPD…VVCEVVEGDI (103 aa)) the chain is Chloroplast intermembrane. Residues 358–365 (TKLSIQYL) traverse the membrane as a beta stranded segment. At 366–410 (DKLGNVVEGNTEGPVVQRELPKQLLPGHTFNIEAGKQALRNINSL) the chain is on the cytoplasmic side. The chain crosses the membrane as a beta stranded span at residues 411–418 (ALFSNIEV). Residues 419–427 (NPRPDEMNE) lie on the Chloroplast intermembrane side of the membrane. A beta stranded membrane pass occupies residues 428 to 436 (GSIIVEIKL). The Cytoplasmic portion of the chain corresponds to 437–442 (KELEQK). The chain crosses the membrane as a beta stranded span at residues 443–452 (SAEVSTEWSI). Over 453 to 464 (VPGRGGRPTLAS) the chain is Chloroplast intermembrane. A beta stranded transmembrane segment spans residues 465-473 (LQPGGTITF). Topologically, residues 474 to 500 (EHRNLQGLNRSLTGSVTTSNFLNPQDD) are cytoplasmic. The beta stranded transmembrane segment at 501–509 (LAFKMEYAH) threads the bilayer. Residues 510-553 (PYLDGVDNPRNRTLRVSCFNSRKLSPVFTGGPGVDEVPSIWVDR) are Chloroplast intermembrane-facing. A beta stranded transmembrane segment spans residues 554–561 (AGVKANIT). Residues 562 to 569 (ENFSRQSK) are Cytoplasmic-facing. Residues 570-577 (FTYGLVME) form a beta stranded membrane-spanning segment. The Chloroplast intermembrane portion of the chain corresponds to 578–684 (EIITRDESNH…VEEGAGKSPP (107 aa)). The chain crosses the membrane as a beta stranded span at residues 685–693 (PVLVLHGHY). The Cytoplasmic segment spans residues 694–705 (GGCVGDLPSYDA). Residues 706-714 (FTLGGPYSV) form a beta stranded membrane-spanning segment. Residues 715–776 (RGYNMGEIGA…VYRRMGQGSS (62 aa)) are Chloroplast intermembrane-facing. The chain crosses the membrane as a beta stranded span at residues 777-783 (YGAGMKL). The Cytoplasmic segment spans residues 784-797 (GLVRAEYAVDHNSG). The beta stranded transmembrane segment at 798 to 805 (TGAVFFRF) threads the bilayer. The Chloroplast intermembrane segment spans residues 806–809 (GERF).

The protein belongs to the TOC75 family. As to quaternary structure, part of the TOC core complex that includes a protein for the specific recognition of transit peptides surrounded by a ring composed of four proteins forming translocation channels, and four to five GTP-binding proteins providing energy. This core complex can interact with components of the TIC complex to form a larger import complex. Chloroplastic protein precursors such as prSS (precursor of the RuBisCO small subunit) also interact with these complexes. TOC75 interacts with OEP14, TOC34/OEP34, TOC86/OEP86, TIC55, TIC110/IEP110 and CLPC. In terms of tissue distribution, mostly expressed in young leaves, also present in old leaves, roots and stems (at protein level).

Its subcellular location is the plastid. The protein localises to the chloroplast outer membrane. In terms of biological role, mediates the insertion of proteins targeted to the outer membrane of chloroplasts. Required for the import of protein precursors into chloroplasts. Forms the voltage-dependent preprotein translocation channels (hydrophilic beta barrel) of the TOC complex in the chloroplastic outer membrane. The narrowest inner diameter of this channel is approximately 14 Angstroms. The sequence is that of Protein TOC75, chloroplastic (TOC75) from Pisum sativum (Garden pea).